Reading from the N-terminus, the 311-residue chain is 4-hydroxy-tetrahydrodipicolinate synthase (311 aa).

T51 serves as a coordination point for pyruvate. Catalysis depends on Y140, which acts as the Proton donor/acceptor. Catalysis depends on K168, which acts as the Schiff-base intermediate with substrate. I209 contributes to the pyruvate binding site.

It belongs to the DapA family. In terms of assembly, homotetramer; dimer of dimers.

The protein localises to the cytoplasm. The enzyme catalyses L-aspartate 4-semialdehyde + pyruvate = (2S,4S)-4-hydroxy-2,3,4,5-tetrahydrodipicolinate + H2O + H(+). It participates in amino-acid biosynthesis; L-lysine biosynthesis via DAP pathway; (S)-tetrahydrodipicolinate from L-aspartate: step 3/4. Functionally, catalyzes the condensation of (S)-aspartate-beta-semialdehyde [(S)-ASA] and pyruvate to 4-hydroxy-tetrahydrodipicolinate (HTPA). In Streptococcus pneumoniae (strain Hungary19A-6), this protein is 4-hydroxy-tetrahydrodipicolinate synthase.